A 90-amino-acid polypeptide reads, in one-letter code: Acylphosphatase (90 aa).

Positions 3-90 (QYHMIADGRV…KGYRTFSISY (88 aa)) constitute an Acylphosphatase-like domain. Residues arginine 18 and asparagine 36 contribute to the active site.

This sequence belongs to the acylphosphatase family.

It catalyses the reaction an acyl phosphate + H2O = a carboxylate + phosphate + H(+). This is Acylphosphatase (acyP) from Bacillus velezensis (strain DSM 23117 / BGSC 10A6 / LMG 26770 / FZB42) (Bacillus amyloliquefaciens subsp. plantarum).